Here is a 129-residue protein sequence, read N- to C-terminus: uncharacterized protein (129 aa).

A signal peptide spans 1 to 27 (MLMRKKKLLSRISFGSLFLLCGTILSA). Cysteine 28 carries N-palmitoyl cysteine lipidation. Cysteine 28 carries S-diacylglycerol cysteine lipidation.

This sequence belongs to the MG439/MG440 family.

It is found in the cell membrane. This is an uncharacterized protein from Mycoplasma pneumoniae (strain ATCC 29342 / M129 / Subtype 1) (Mycoplasmoides pneumoniae).